Reading from the N-terminus, the 312-residue chain is DNA-directed RNA polymerase subunit alpha (312 aa).

Positions 1-226 are alpha N-terminal domain (alpha-NTD); the sequence is MIEFEKPKIT…DHLNLFVDLS (226 aa). Residues 243–312 are alpha C-terminal domain (alpha-CTD); it reads TERVLDKIIE…ELGLSLKKRK (70 aa).

This sequence belongs to the RNA polymerase alpha chain family. Homodimer. The RNAP catalytic core consists of 2 alpha, 1 beta, 1 beta' and 1 omega subunit. When a sigma factor is associated with the core the holoenzyme is formed, which can initiate transcription.

It carries out the reaction RNA(n) + a ribonucleoside 5'-triphosphate = RNA(n+1) + diphosphate. In terms of biological role, DNA-dependent RNA polymerase catalyzes the transcription of DNA into RNA using the four ribonucleoside triphosphates as substrates. The polypeptide is DNA-directed RNA polymerase subunit alpha (Lactococcus lactis subsp. cremoris (strain MG1363)).